We begin with the raw amino-acid sequence, 438 residues long: Argininosuccinate lyase (438 aa).

This sequence belongs to the lyase 1 family. Argininosuccinate lyase subfamily.

The protein localises to the cytoplasm. The enzyme catalyses 2-(N(omega)-L-arginino)succinate = fumarate + L-arginine. The protein operates within amino-acid biosynthesis; L-arginine biosynthesis; L-arginine from L-ornithine and carbamoyl phosphate: step 3/3. The sequence is that of Argininosuccinate lyase from Clostridium kluyveri (strain NBRC 12016).